Here is a 97-residue protein sequence, read N- to C-terminus: Large ribosomal subunit protein eL21 (97 aa).

A compositionally biased stretch (basic residues) spans 1–24 (MVQKPHSFRRKTRKKLRKHPRRRG). A disordered region spans residues 1-25 (MVQKPHSFRRKTRKKLRKHPRRRGL).

This sequence belongs to the eukaryotic ribosomal protein eL21 family.

The sequence is that of Large ribosomal subunit protein eL21 (rpl21e) from Pyrococcus horikoshii (strain ATCC 700860 / DSM 12428 / JCM 9974 / NBRC 100139 / OT-3).